The sequence spans 1441 residues: Envelopment polyprotein (1441 aa).

The N-terminal stretch at 1–13 (MICILVLITVAAA) is a signal peptide. At 14-200 (SPVYQRCFQD…GSIANSICQN (187 aa)) the chain is on the lumenal side. A glycan (N-linked (GlcNAc...) asparagine; by host) is linked at Asn-57. A transmembrane span lies at residues 201–221 (IEIIILVTLTLLIFILLSILS). The Cytoplasmic portion of the chain corresponds to 222–305 (KTYICYLLMP…RAARVMCKSK (84 aa)). Over 306 to 326 (GPASILSIITAVLVLTFVTPI) the chain traverses the membrane. Over 327 to 361 (NSMVLGESKETFELEDLPDDMLEMASRINSYYLTC) the chain is Lumenal. The segment at 362–382 (ILNYAVSWGLVIIGLLIGLLF) is a transmembrane helix. At 383–450 (KKYQHRFLNV…NCLVQYKAKW (68 aa)) the chain is on the cytoplasmic side. A membrane pass occupies residues 451-471 (MMNFLIIYIFLILIKDSAIVV). Residues 472-1395 (QAAGTDFTTC…EPFKNLFGSY (924 aa)) lie on the Lumenal side of the membrane. Asn-490 carries an N-linked (GlcNAc...) asparagine; by host glycan. Residues 1066 to 1087 (WGCEEFGCLAVSDGCVFGSCQD) form a fusion peptide region. A glycan (N-linked (GlcNAc...) asparagine; by host) is linked at Asn-1177. Over 1396 to 1416 (IGIFYTFIISIVVLLVIIYVL) the chain traverses the membrane. The Cytoplasmic portion of the chain corresponds to 1417 to 1433 (LPICFKLRDTLRKHEDA).

Belongs to the orthobunyaviruses M polyprotein family. In terms of assembly, glycoprotein C and Glycoprotein N interact with each other.

The protein resides in the virion membrane. Its subcellular location is the host Golgi apparatus membrane. The protein localises to the host endoplasmic reticulum membrane. Glycoprotein C and glycoprotein N interact with each other and are present at the surface of the virion. They are able to attach the virion to a cell receptor and to promote fusion of membranes after endocytosis of the virion. This Bunyavirus La Crosse (isolate Human/United States/L78/1978) protein is Envelopment polyprotein (GP).